The chain runs to 157 residues: 2-C-methyl-D-erythritol 2,4-cyclodiphosphate synthase (157 aa).

2 residues coordinate a divalent metal cation: D8 and H10. Residues 8–10 (DIH) and 35–36 (HS) each bind 4-CDP-2-C-methyl-D-erythritol 2-phosphate. H43 serves as a coordination point for a divalent metal cation. 4-CDP-2-C-methyl-D-erythritol 2-phosphate contacts are provided by residues 57-59 (DIG), 62-66 (FPNND), and K142.

This sequence belongs to the IspF family. Homotrimer. It depends on a divalent metal cation as a cofactor.

It catalyses the reaction 4-CDP-2-C-methyl-D-erythritol 2-phosphate = 2-C-methyl-D-erythritol 2,4-cyclic diphosphate + CMP. Its pathway is isoprenoid biosynthesis; isopentenyl diphosphate biosynthesis via DXP pathway; isopentenyl diphosphate from 1-deoxy-D-xylulose 5-phosphate: step 4/6. Involved in the biosynthesis of isopentenyl diphosphate (IPP) and dimethylallyl diphosphate (DMAPP), two major building blocks of isoprenoid compounds. Catalyzes the conversion of 4-diphosphocytidyl-2-C-methyl-D-erythritol 2-phosphate (CDP-ME2P) to 2-C-methyl-D-erythritol 2,4-cyclodiphosphate (ME-CPP) with a corresponding release of cytidine 5-monophosphate (CMP). The chain is 2-C-methyl-D-erythritol 2,4-cyclodiphosphate synthase from Wigglesworthia glossinidia brevipalpis.